Consider the following 78-residue polypeptide: Putative permease-like protein YdzE (78 aa).

A run of 3 helical transmembrane segments spans residues 2-22, 27-47, and 49-69; these read YLGI…LQLL, GGLF…ILLG, and QIGG…LLVI. The region spanning 2–70 is the EamA domain; sequence YLGIVSTACA…ILSGVLLVIK (69 aa).

The protein belongs to the EamA transporter family.

Its subcellular location is the cell membrane. The polypeptide is Putative permease-like protein YdzE (ydzE) (Bacillus subtilis (strain 168)).